The primary structure comprises 360 residues: Photosystem II protein D1 1 (360 aa).

Transmembrane regions (helical) follow at residues 29–46 (YVGWFGVLMIPTLLAATV), 118–133 (HFLIGCACYLGRQWEL), and 142–156 (WICVAYSAPLASATA). H118 is a binding site for chlorophyll a. Y126 serves as a coordination point for pheophytin a. 2 residues coordinate [CaMn4O5] cluster: D170 and E189. A helical transmembrane segment spans residues 197–218 (FHMLGVAGVFGGSLFSAMHGSL). Position 198 (H198) interacts with chlorophyll a. A quinone contacts are provided by residues H215 and 264-265 (SF). H215 provides a ligand contact to Fe cation. H272 is a Fe cation binding site. The chain crosses the membrane as a helical span at residues 274–288 (FLAAWPVIGIWFTAL). The [CaMn4O5] cluster site is built by H332, E333, D342, and A344. Positions 345-360 (AGEVAPVALTAPAING) are excised as a propeptide.

The protein belongs to the reaction center PufL/M/PsbA/D family. PSII is composed of 1 copy each of membrane proteins PsbA, PsbB, PsbC, PsbD, PsbE, PsbF, PsbH, PsbI, PsbJ, PsbK, PsbL, PsbM, PsbT, PsbX, PsbY, PsbZ, Psb30/Ycf12, peripheral proteins PsbO, CyanoQ (PsbQ), PsbU, PsbV and a large number of cofactors. It forms dimeric complexes. The cofactor is The D1/D2 heterodimer binds P680, chlorophylls that are the primary electron donor of PSII, and subsequent electron acceptors. It shares a non-heme iron and each subunit binds pheophytin, quinone, additional chlorophylls, carotenoids and lipids. D1 provides most of the ligands for the Mn4-Ca-O5 cluster of the oxygen-evolving complex (OEC). There is also a Cl(-1) ion associated with D1 and D2, which is required for oxygen evolution. The PSII complex binds additional chlorophylls, carotenoids and specific lipids.. Tyr-161 forms a radical intermediate that is referred to as redox-active TyrZ, YZ or Y-Z. Post-translationally, C-terminally processed by CtpA; processing is essential to allow assembly of the oxygen-evolving complex and thus photosynthetic growth.

The protein resides in the cellular thylakoid membrane. It catalyses the reaction 2 a plastoquinone + 4 hnu + 2 H2O = 2 a plastoquinol + O2. In terms of biological role, photosystem II (PSII) is a light-driven water:plastoquinone oxidoreductase that uses light energy to abstract electrons from H(2)O, generating O(2) and a proton gradient subsequently used for ATP formation. It consists of a core antenna complex that captures photons, and an electron transfer chain that converts photonic excitation into a charge separation. The D1/D2 (PsbA/PsbD) reaction center heterodimer binds P680, the primary electron donor of PSII as well as several subsequent electron acceptors. This Nostoc sp. (strain PCC 7120 / SAG 25.82 / UTEX 2576) protein is Photosystem II protein D1 1.